The sequence spans 201 residues: Acireductone dioxygenase 2 (201 aa).

The Fe(2+) site is built by His-83, His-85, Glu-89, and His-129. Residues His-83, His-85, Glu-89, and His-129 each contribute to the Ni(2+) site.

The protein belongs to the acireductone dioxygenase (ARD) family. Requires Fe(2+) as cofactor. Ni(2+) serves as cofactor.

The protein localises to the cytoplasm. It is found in the nucleus. The enzyme catalyses 1,2-dihydroxy-5-(methylsulfanyl)pent-1-en-3-one + O2 = 4-methylsulfanyl-2-oxobutanoate + formate + 2 H(+). It carries out the reaction 1,2-dihydroxy-5-(methylsulfanyl)pent-1-en-3-one + O2 = 3-(methylsulfanyl)propanoate + CO + formate + 2 H(+). The protein operates within amino-acid biosynthesis; L-methionine biosynthesis via salvage pathway; L-methionine from S-methyl-5-thio-alpha-D-ribose 1-phosphate: step 5/6. Functionally, catalyzes 2 different reactions between oxygen and the acireductone 1,2-dihydroxy-3-keto-5-methylthiopentene (DHK-MTPene) depending upon the metal bound in the active site. Fe-containing acireductone dioxygenase (Fe-ARD) produces formate and 2-keto-4-methylthiobutyrate (KMTB), the alpha-ketoacid precursor of methionine in the methionine recycle pathway. Ni-containing acireductone dioxygenase (Ni-ARD) produces methylthiopropionate, carbon monoxide and formate, and does not lie on the methionine recycle pathway. The chain is Acireductone dioxygenase 2 from Coprinopsis cinerea (strain Okayama-7 / 130 / ATCC MYA-4618 / FGSC 9003) (Inky cap fungus).